Consider the following 83-residue polypeptide: Snake venom metalloproteinase BnP1 (83 aa).

Residues 8-83 (SYIELAVVAD…NPQCIINQPI (76 aa)) enclose the Peptidase M12B domain. Residues E11, C77, and N80 each coordinate Ca(2+).

It belongs to the venom metalloproteinase (M12B) family. P-I subfamily. As to quaternary structure, monomer. Zn(2+) serves as cofactor. As to expression, expressed by the venom gland.

The protein resides in the secreted. With respect to regulation, inhibited by EDTA. Its function is as follows. This protein is a zinc protease from snake venom that is devoid of significant myotoxic and hemorrhagic activities. It hydrolyzes the Aalpha-chain and more slowly the Bbeta-chain of fibrin and fibrinogen, without affecting the gamma-chains. It induces cell detachment and a apoptosis (anoikis) in endothelial cells. This Bothrops pauloensis (Neuwied's lancehead) protein is Snake venom metalloproteinase BnP1.